The primary structure comprises 516 residues: GMP synthase [glutamine-hydrolyzing] (516 aa).

The region spanning 7 to 203 (SVIVLDFGSQ…LIDIAGITPD (197 aa)) is the Glutamine amidotransferase type-1 domain. Catalysis depends on Cys-84, which acts as the Nucleophile. Residues His-177 and Glu-179 contribute to the active site. The GMPS ATP-PPase domain maps to 204–391 (WSPKSFIQHQ…LGIAEDILMR (188 aa)). Residue 231-237 (SGGVDST) coordinates ATP.

As to quaternary structure, homodimer.

It catalyses the reaction XMP + L-glutamine + ATP + H2O = GMP + L-glutamate + AMP + diphosphate + 2 H(+). Its pathway is purine metabolism; GMP biosynthesis; GMP from XMP (L-Gln route): step 1/1. Catalyzes the synthesis of GMP from XMP. The chain is GMP synthase [glutamine-hydrolyzing] from Chlorobaculum tepidum (strain ATCC 49652 / DSM 12025 / NBRC 103806 / TLS) (Chlorobium tepidum).